Here is a 185-residue protein sequence, read N- to C-terminus: Protein OPG161 (185 aa).

Over 1 to 33 (MMTPENDEEQTSVFSATVYGDKIQGKNKRKRVI) the chain is Intravirion. Residues 34–56 (GLCIRISMVISLLSMITMSAFLI) form a helical membrane-spanning segment. Over 57–185 (VRLNQCMSAN…RKYFCVKTMN (129 aa)) the chain is Virion surface. A C-type lectin-like domain region spans residues 98-185 (ESCNGLYYQG…RKYFCVKTMN (88 aa)). Residues Asn-125 and Asn-135 are each glycosylated (N-linked (GlcNAc...) asparagine; by host).

It belongs to the orthopoxvirus OPG161 family. Homodimer, disulfide-linked. Interacts with protein OPG190. Interacts (via C-terminus) with protein OPG164. Interacts with OPG162.

The protein resides in the virion membrane. It is found in the host membrane. Functionally, forms a complex with OPG162 and OPG190 to coordinate the incorporation of OPG164 into wrapped enveloped virion (EV) membranes and, subsequently, the production of actin tails. Therefore plays an essential role in efficient cell-to-cell spread of viral particles. This is Protein OPG161 (OPG161) from Homo sapiens (Human).